Reading from the N-terminus, the 481-residue chain is MSVSTETKSSGRITQIIGPVLDVSFPAGKMPNIYNALTVGGKNEAGQEISVTCEVQQLLGDHCVRAVAMSATDGLMRGMEVLDSGKPLNVPVGAATLGRIFNVLGEPVDNLGPVNTKDQLPIHRSAPAFVDLDTKLSIFESGIKVVDLLAPYRRGGKIGLFGGAGVGKTVLIMELINNIAKAHGGVSVFGGVGERTREGNDLYMEMKESGVINESNISESKVALVYGQMNEPPGARMRVGLTALTMAEFFRDINKQDVLLFIDNIFRFVQAGSEVSALLGRMPSAVGYQPTLATEMGGLQERITSTKDGSITSIQAVYVPADDLTDPAPATTFAHLDATTVLSRNLASKGIYPAVDPLDSTSTMLQPWIVGDQHYQCAQNVKQTLQRYKELQDIIAILGLDELSEEDRLIVARARKIERFLSQPFFVAEVFTGSPGKYVSLAETIQGFNLILSGELDDLPEQAFYLVGNLDEAVSKAATLS.

Residue 162 to 169 coordinates ATP; that stretch reads GGAGVGKT.

The protein belongs to the ATPase alpha/beta chains family. In terms of assembly, F-type ATPases have 2 components, CF(1) - the catalytic core - and CF(0) - the membrane proton channel. CF(1) has five subunits: alpha(3), beta(3), gamma(1), delta(1), epsilon(1). CF(0) has four main subunits: a(1), b(1), b'(1) and c(9-12).

The protein localises to the plastid. It is found in the chloroplast thylakoid membrane. It catalyses the reaction ATP + H2O + 4 H(+)(in) = ADP + phosphate + 5 H(+)(out). Its function is as follows. Produces ATP from ADP in the presence of a proton gradient across the membrane. The catalytic sites are hosted primarily by the beta subunits. In Chlorella vulgaris (Green alga), this protein is ATP synthase subunit beta, chloroplastic.